The following is a 399-amino-acid chain: Ribonuclease D (399 aa).

Positions 31-197 (RVVTDNTALL…PLYHILEKEL (167 aa)) constitute a 3'-5' exonuclease domain. Positions 239–318 (NPLELSRLRV…SQARRISSND (80 aa)) constitute an HRDC domain.

The protein belongs to the RNase D family. A divalent metal cation is required as a cofactor.

The protein resides in the cytoplasm. It catalyses the reaction Exonucleolytic cleavage that removes extra residues from the 3'-terminus of tRNA to produce 5'-mononucleotides.. Exonuclease involved in the 3' processing of various precursor tRNAs. Initiates hydrolysis at the 3'-terminus of an RNA molecule and releases 5'-mononucleotides. In Haemophilus influenzae (strain ATCC 51907 / DSM 11121 / KW20 / Rd), this protein is Ribonuclease D.